An 82-amino-acid chain; its full sequence is MAGKPVERPFSDILTSIRYWVIHSITVPALFIAGWLFVSTGLAYDVFGTPRPNEYFTEDRQEAPLITDRFNALEQVKKLSGN.

A helical transmembrane segment spans residues 21 to 35 (VIHSITVPALFIAGW). A heme-binding site is contributed by His-23.

Belongs to the PsbE/PsbF family. As to quaternary structure, heterodimer of an alpha subunit and a beta subunit. PSII is composed of 1 copy each of membrane proteins PsbA, PsbB, PsbC, PsbD, PsbE, PsbF, PsbH, PsbI, PsbJ, PsbK, PsbL, PsbM, PsbT, PsbX, PsbY, PsbZ, Psb30/Ycf12, at least 3 peripheral proteins of the oxygen-evolving complex and a large number of cofactors. It forms dimeric complexes. Heme b is required as a cofactor.

Its subcellular location is the plastid. It is found in the chloroplast thylakoid membrane. In terms of biological role, this b-type cytochrome is tightly associated with the reaction center of photosystem II (PSII). PSII is a light-driven water:plastoquinone oxidoreductase that uses light energy to abstract electrons from H(2)O, generating O(2) and a proton gradient subsequently used for ATP formation. It consists of a core antenna complex that captures photons, and an electron transfer chain that converts photonic excitation into a charge separation. In Chlamydomonas reinhardtii (Chlamydomonas smithii), this protein is Cytochrome b559 subunit alpha.